A 179-amino-acid polypeptide reads, in one-letter code: Natural killer cells antigen CD94 (179 aa).

Residues Met-1–Trp-10 lie on the Cytoplasmic side of the membrane. The chain crosses the membrane as a helical; Signal-anchor for type II membrane protein span at residues Leu-11–Leu-31. Over Lys-32 to Ile-179 the chain is Extracellular. Intrachain disulfides connect Cys-58–Cys-70 and Cys-61–Cys-72. Positions Tyr-68–Lys-175 constitute a C-type lectin domain. Residues Asn-83 and Asn-132 are each glycosylated (N-linked (GlcNAc...) asparagine). Cystine bridges form between Cys-89/Cys-174 and Cys-152/Cys-166.

In terms of assembly, can form disulfide-bonded heterodimer with NKG2 family members KLRC1 and KLRC2. KLRD1-KLRC1 heterodimer interacts with peptide-bound MHC-E-B2M heterotrimeric complex. KLRD1 plays a prominent role in directly interacting with MHC-E. KLRD1-KLRC1 interacts with much higher affinity with peptide-bound MHC-E-B2M than KLRD1-KLRC2. Interacts with the adapter protein TYROBP/DAP12; this interaction is required for cell surface expression and cell activation. Natural killer cells.

The protein localises to the cell membrane. Its function is as follows. Immune receptor involved in self-nonself discrimination. In complex with KLRC1 or KLRC2 on cytotoxic and regulatory lymphocyte subsets, recognizes non-classical major histocompatibility (MHC) class Ib molecule MHC-E loaded with self-peptides derived from the signal sequence of classical MHC class Ia and non-classical MHC class Ib molecules. Enables cytotoxic cells to monitor the expression of MHC class I molecules in healthy cells and to tolerate self. Primarily functions as a ligand binding subunit as it lacks the capacity to signal. In terms of biological role, KLRD1-KLRC1 acts as an immune inhibitory receptor. Key inhibitory receptor on natural killer (NK) cells that regulates their activation and effector functions. Dominantly counteracts T cell receptor signaling on a subset of memory/effector CD8-positive T cells as part of an antigen-driven response to avoid autoimmunity. On intraepithelial CD8-positive gamma-delta regulatory T cells triggers TGFB1 secretion, which in turn limits the cytotoxic programming of intraepithelial CD8-positive alpha-beta T cells, distinguishing harmless from pathogenic antigens. In MHC-E-rich tumor microenvironment, acts as an immune inhibitory checkpoint and may contribute to progressive loss of effector functions of NK cells and tumor-specific T cells, a state known as cell exhaustion. Upon MHC-E-peptide binding, transmits intracellular signals through KLRC1 immunoreceptor tyrosine-based inhibition motifs (ITIMs) by recruiting INPP5D/SHIP-1 and INPPL1/SHIP-2 tyrosine phosphatases to ITIMs, and ultimately opposing signals transmitted by activating receptors through dephosphorylation of proximal signaling molecules. KLRD1-KLRC2 acts as an immune activating receptor. On cytotoxic lymphocyte subsets recognizes MHC-E loaded with signal sequence-derived peptides from non-classical MHC class Ib MHC-G molecules, likely playing a role in the generation and effector functions of adaptive NK cells and in maternal-fetal tolerance during pregnancy. Regulates the effector functions of terminally differentiated cytotoxic lymphocyte subsets, and in particular may play a role in adaptive NK cell response to viral infection. Upon MHC-E-peptide binding, transmits intracellular signals via the adapter protein TYROBP/DAP12, triggering the phosphorylation of proximal signaling molecules and cell activation. In Pongo pygmaeus (Bornean orangutan), this protein is Natural killer cells antigen CD94 (KLRD1).